Reading from the N-terminus, the 399-residue chain is Dof zinc finger protein DOF5.1 (399 aa).

A Dof-type zinc finger spans residues 95-149 (LKCPRCDSTNTKFCYFNNYSLTQPRHFCKACRRYWTRGGALRSVPVGGGCRRNKR). Positions 97, 100, 122, and 125 each coordinate Zn(2+). Positions 139–176 (PVGGGCRRNKRTKNSSGGGGGSTSSGNSKSQDSATSND) are disordered.

Expressed ubiquitously, especially in the vascular tissues, except in seeds, petals and anthers. Specific to the vascular tissues in young leaves, cotyledons and flower buds. The PEAR proteins (e.g. DOF2.4, DOF5.1, DOF3.2, DOF1.1, DOF5.6 and DOF5.3) form a short-range concentration gradient that peaks at protophloem sieve elements (PSE).

The protein resides in the nucleus. Transcription factor that binds specifically to a 5'-AA[AG]G-3' consensus core sequence. Binds to 5'-TAAAGT-3' motif in REV promoter to triggers its transcription, thus regulating adaxial-abaxial polarity and influencing leaf axial patterning in an auxin transport- and response-dependent manner (e.g. IAA6 and IAA19 genes expression). Probably involved in early processes for vascular development. The PEAR proteins (e.g. DOF2.4, DOF5.1, DOF3.2, DOF1.1, DOF5.6 and DOF5.3) activate gene expression that promotes radial growth of protophloem sieve elements. The polypeptide is Dof zinc finger protein DOF5.1 (Arabidopsis thaliana (Mouse-ear cress)).